The primary structure comprises 352 residues: Protein SIS1 (352 aa).

Residues 4–70 enclose the J domain; sequence ETKLYDLLGV…REIYDQYGLE (67 aa). Position 275 is a phosphoserine (Ser275). Residues 300-325 are disordered; sequence VQPVQPSQTSTYPGQGMPTPKNPSQR. Residues 301 to 312 are compositionally biased toward polar residues; it reads QPVQPSQTSTYP.

As to quaternary structure, interacts with polyadenylate-binding protein PAB1.

Its subcellular location is the cytoplasm. The protein resides in the nucleus. In terms of biological role, required for nuclear migration during mitosis. It is required for the normal initiation of translation. Might mediate the dissociation of a specific protein complex of the translation machinery. Essential for viability. This is Protein SIS1 (SIS1) from Saccharomyces cerevisiae (strain ATCC 204508 / S288c) (Baker's yeast).